Reading from the N-terminus, the 734-residue chain is Cytoplasmic polyadenylation element-binding protein 3 (734 aa).

Disordered stretches follow at residues 1–31 (MDRN…RNVP), 98–185 (GSKK…AARN), and 220–283 (RGSL…LPPR). The span at 16 to 26 (PAEHPGDEKSG) shows a compositional bias: basic and acidic residues. 2 stretches are compositionally biased toward low complexity: residues 121–140 (SRRT…SPSR) and 232–242 (KSFSSTTTSSS). The span at 243–256 (PEKEREKEKEKIEQ) shows a compositional bias: basic and acidic residues. A compositionally biased stretch (polar residues) spans 259 to 275 (YGTTQRQSVNSQQSSAS). The RRM domain maps to 294–316 (IFVGGVPWDITEAALKDSFGEFG). 2 disordered regions span residues 564-593 (KAYQ…SNNS) and 630-657 (TVYD…SNSN). The segment covering 576 to 593 (LSSNSPSKARDGQNSNNS) has biased composition (low complexity).

Cytoplasmic polyadenylation element binding protein that binds to and regulates the translation of specific mRNAs. The sequence is that of Cytoplasmic polyadenylation element-binding protein 3 (cpb-3) from Caenorhabditis japonica.